Consider the following 431-residue polypeptide: MIAKPEREQIIALINREVVPAIGCTEPIAVALCVAKATETLGKRPERIKALLSANILKNAMGVGIPGTGMIGLPIAIALGALIGKSEYQLEVLKDSTPDAVAEGKKLIDSQAISIGLKENIEEKLYIEIICEADGDTATAIIACGHTNFIYVALNNQVLLNKQTTSTCNEDAKEPELNLRKVYDFATTTPLDEIRFILETKRLNKAAAERSFKGNYGHELGKILKSSKSEEQILGSNTFTHILSYTSAACDARMAGAMIPVMSNSGSGNQGITATLPVVVYAEDNHKSEEELIRALTLSHLTAIYIKQSLGRLSALCGCVVAATGSSCGITYLMGGTYEQITFAVQNMIANLTGMICDGAKPSCALKLSSGVSTAVFSAILAMEHKCVSSVEGIIDNDVDRSIRNLTRIGSQGMNETDKLVLDIMTHKQCD.

This sequence belongs to the UPF0597 family.

This Phocaeicola vulgatus (strain ATCC 8482 / DSM 1447 / JCM 5826 / CCUG 4940 / NBRC 14291 / NCTC 11154) (Bacteroides vulgatus) protein is UPF0597 protein BVU_2091.